Consider the following 444-residue polypeptide: Protein-serine O-palmitoleoyltransferase porcupine (444 aa).

Helical transmembrane passes span 29-49 (NGTLLTLLQMLVLVWMFFLVW), 81-101 (VMIFHTFSLISLFCAVQKLNG), 128-150 (FLTLRGVLMMHIMRLSTASFAIV), 163-183 (TLYLEYIYFPPFIIFGPYVTF), 201-221 (LGVFVQGSVLIFIGITLAIIS), 249-269 (YFICLSTQAFAMFLGSKIVVA), 304-324 (FFQSTALNVLLTFAVSALLHA), 326-346 (DYQMWLTLLALGFIAYSETVF), 383-403 (VLIINLFFMILSMYHLVFTGM), and 420-440 (WTIWGTHYYSSFIVSFAFLAL). Histidine 323 is a catalytic residue.

This sequence belongs to the membrane-bound acyltransferase family. Porcupine subfamily.

The protein localises to the membrane. The enzyme catalyses [Wnt protein]-L-serine + (9Z)-hexadecenoyl-CoA = [Wnt protein]-O-(9Z)-hexadecenoyl-L-serine + CoA. Functionally, key regulator of the Wnt signaling pathway that mediates lipid modification of Wnt proteins. Acts as a protein-serine O-palmitoleoyltransferase that catalyzes the attachment of palmitoleate, a 16-carbon monounsaturated fatty acid (C16:1(9Z)), to Wnt proteins. Serine palmitoleoylation of WNT proteins is required for efficient binding to frizzled receptors. Has a role in cell specification, specifically in blastomere signaling. Involved in cytosketetal polarity. Required for the orientation of mitotic spindle axis. This is Protein-serine O-palmitoleoyltransferase porcupine from Caenorhabditis briggsae.